Reading from the N-terminus, the 294-residue chain is Pyridoxal 5'-phosphate synthase subunit PdxS (294 aa).

Asp24 is a binding site for D-ribose 5-phosphate. Residue Lys81 is the Schiff-base intermediate with D-ribose 5-phosphate of the active site. Gly153 contributes to the D-ribose 5-phosphate binding site. Arg165 contacts D-glyceraldehyde 3-phosphate. Residues Gly214 and 235-236 (GS) each bind D-ribose 5-phosphate.

Belongs to the PdxS/SNZ family. In terms of assembly, in the presence of PdxT, forms a dodecamer of heterodimers.

It carries out the reaction aldehydo-D-ribose 5-phosphate + D-glyceraldehyde 3-phosphate + L-glutamine = pyridoxal 5'-phosphate + L-glutamate + phosphate + 3 H2O + H(+). It functions in the pathway cofactor biosynthesis; pyridoxal 5'-phosphate biosynthesis. Functionally, catalyzes the formation of pyridoxal 5'-phosphate from ribose 5-phosphate (RBP), glyceraldehyde 3-phosphate (G3P) and ammonia. The ammonia is provided by the PdxT subunit. Can also use ribulose 5-phosphate and dihydroxyacetone phosphate as substrates, resulting from enzyme-catalyzed isomerization of RBP and G3P, respectively. The chain is Pyridoxal 5'-phosphate synthase subunit PdxS from Geobacillus thermodenitrificans (strain NG80-2).